Consider the following 334-residue polypeptide: Holliday junction branch migration complex subunit RuvB (334 aa).

Residues A4–Y184 are large ATPase domain (RuvB-L). Residues R24, G65, K68, T69, T70, E131–Y133, R174, Y184, and R221 each bind ATP. T69 serves as a coordination point for Mg(2+). The segment at N185–D255 is small ATPAse domain (RuvB-S). The segment at S258–E334 is head domain (RuvB-H). The DNA site is built by R294, R313, and R318.

It belongs to the RuvB family. As to quaternary structure, homohexamer. Forms an RuvA(8)-RuvB(12)-Holliday junction (HJ) complex. HJ DNA is sandwiched between 2 RuvA tetramers; dsDNA enters through RuvA and exits via RuvB. An RuvB hexamer assembles on each DNA strand where it exits the tetramer. Each RuvB hexamer is contacted by two RuvA subunits (via domain III) on 2 adjacent RuvB subunits; this complex drives branch migration. In the full resolvosome a probable DNA-RuvA(4)-RuvB(12)-RuvC(2) complex forms which resolves the HJ.

Its subcellular location is the cytoplasm. It catalyses the reaction ATP + H2O = ADP + phosphate + H(+). Functionally, the RuvA-RuvB-RuvC complex processes Holliday junction (HJ) DNA during genetic recombination and DNA repair, while the RuvA-RuvB complex plays an important role in the rescue of blocked DNA replication forks via replication fork reversal (RFR). RuvA specifically binds to HJ cruciform DNA, conferring on it an open structure. The RuvB hexamer acts as an ATP-dependent pump, pulling dsDNA into and through the RuvAB complex. RuvB forms 2 homohexamers on either side of HJ DNA bound by 1 or 2 RuvA tetramers; 4 subunits per hexamer contact DNA at a time. Coordinated motions by a converter formed by DNA-disengaged RuvB subunits stimulates ATP hydrolysis and nucleotide exchange. Immobilization of the converter enables RuvB to convert the ATP-contained energy into a lever motion, pulling 2 nucleotides of DNA out of the RuvA tetramer per ATP hydrolyzed, thus driving DNA branch migration. The RuvB motors rotate together with the DNA substrate, which together with the progressing nucleotide cycle form the mechanistic basis for DNA recombination by continuous HJ branch migration. Branch migration allows RuvC to scan DNA until it finds its consensus sequence, where it cleaves and resolves cruciform DNA. This is Holliday junction branch migration complex subunit RuvB from Shewanella baltica (strain OS155 / ATCC BAA-1091).